Consider the following 356-residue polypeptide: 3-dehydroquinate synthase (356 aa).

Residues 106-110, 130-131, K143, K152, and 170-173 contribute to the NAD(+) site; these read GVVGD, TS, and FLKT. E185, H246, and H263 together coordinate Zn(2+).

This sequence belongs to the sugar phosphate cyclases superfamily. Dehydroquinate synthase family. Requires NAD(+) as cofactor. Co(2+) serves as cofactor. Zn(2+) is required as a cofactor.

It is found in the cytoplasm. It carries out the reaction 7-phospho-2-dehydro-3-deoxy-D-arabino-heptonate = 3-dehydroquinate + phosphate. Its pathway is metabolic intermediate biosynthesis; chorismate biosynthesis; chorismate from D-erythrose 4-phosphate and phosphoenolpyruvate: step 2/7. In terms of biological role, catalyzes the conversion of 3-deoxy-D-arabino-heptulosonate 7-phosphate (DAHP) to dehydroquinate (DHQ). The polypeptide is 3-dehydroquinate synthase (Clostridium acetobutylicum (strain ATCC 824 / DSM 792 / JCM 1419 / IAM 19013 / LMG 5710 / NBRC 13948 / NRRL B-527 / VKM B-1787 / 2291 / W)).